Here is a 279-residue protein sequence, read N- to C-terminus: Tryptophan synthase alpha chain (279 aa).

Residues E50 and D61 each act as proton acceptor in the active site.

It belongs to the TrpA family. Tetramer of two alpha and two beta chains.

It carries out the reaction (1S,2R)-1-C-(indol-3-yl)glycerol 3-phosphate + L-serine = D-glyceraldehyde 3-phosphate + L-tryptophan + H2O. It participates in amino-acid biosynthesis; L-tryptophan biosynthesis; L-tryptophan from chorismate: step 5/5. Its function is as follows. The alpha subunit is responsible for the aldol cleavage of indoleglycerol phosphate to indole and glyceraldehyde 3-phosphate. This chain is Tryptophan synthase alpha chain, found in Azorhizobium caulinodans (strain ATCC 43989 / DSM 5975 / JCM 20966 / LMG 6465 / NBRC 14845 / NCIMB 13405 / ORS 571).